The following is a 403-amino-acid chain: Tyrosine--tRNA ligase (403 aa).

The 'HIGH' region signature appears at 42 to 51 (PTAPDLHLGH). Residues 226–230 (KMSKS) carry the 'KMSKS' region motif. Lysine 229 is a binding site for ATP. One can recognise an S4 RNA-binding domain in the interval 339 to 400 (LRLAGLLTAA…GKRNFARVSL (62 aa)).

It belongs to the class-I aminoacyl-tRNA synthetase family. TyrS type 2 subfamily. As to quaternary structure, homodimer.

The protein localises to the cytoplasm. The catalysed reaction is tRNA(Tyr) + L-tyrosine + ATP = L-tyrosyl-tRNA(Tyr) + AMP + diphosphate + H(+). Catalyzes the attachment of tyrosine to tRNA(Tyr) in a two-step reaction: tyrosine is first activated by ATP to form Tyr-AMP and then transferred to the acceptor end of tRNA(Tyr). This Xanthomonas axonopodis pv. citri (strain 306) protein is Tyrosine--tRNA ligase.